Here is a 109-residue protein sequence, read N- to C-terminus: UPF0122 protein CLH_1195 (109 aa).

This sequence belongs to the UPF0122 family.

Functionally, might take part in the signal recognition particle (SRP) pathway. This is inferred from the conservation of its genetic proximity to ftsY/ffh. May be a regulatory protein. This is UPF0122 protein CLH_1195 from Clostridium botulinum (strain Alaska E43 / Type E3).